The chain runs to 100 residues: Integration host factor subunit alpha (100 aa).

Belongs to the bacterial histone-like protein family. In terms of assembly, heterodimer of an alpha and a beta chain.

Its function is as follows. This protein is one of the two subunits of integration host factor, a specific DNA-binding protein that functions in genetic recombination as well as in transcriptional and translational control. The sequence is that of Integration host factor subunit alpha from Caulobacter vibrioides (strain ATCC 19089 / CIP 103742 / CB 15) (Caulobacter crescentus).